Reading from the N-terminus, the 469-residue chain is MTVQTFTPNQTTTLDTAKKTIEQQSQELTPSGGNKIGFVSLGCPKNLVDSERILTQLRTEGYEIVNSYHDSDVVIVNTCGFIDSAVQESLDTIGEALKENGKVIVTGCLGAREDEIREVHPGVLGITGPHAYENVLEHVHQFAPKPEHNPFTSLVPDHGVKLTPKHYAYLKISEGCNHRCTFCIIPSMRGDLVSRPVGEILSEAERLKNAGVKELLVISQDTSAYGVDSKHSLGFANGSPVRQNIKALSEELGKMGIWVRLHYVYPYPHVDDLIPLMAEGKILPYLDIPFQHASPNVLKAMKRPGRAERTLDQIKKWREICPELVIRSTFIVGFPGETDEDFEMLLEWLKEAQLDRVGCFKYSPVEGAAANDIDDQISEEVKQERFECFMLVQQEISAAKLQKRIGSTMKVIIDEVDEEGAIGRTYADAPEIDGLVYLNGETSLKAGELVDVLIEHADEYDLWGSLVRA.

The MTTase N-terminal domain occupies 34-144 (NKIGFVSLGC…VLEHVHQFAP (111 aa)). [4Fe-4S] cluster-binding residues include Cys-43, Cys-79, Cys-108, Cys-176, Cys-180, and Cys-183. The 238-residue stretch at 162–399 (LTPKHYAYLK…MLVQQEISAA (238 aa)) folds into the Radical SAM core domain. A TRAM domain is found at 402–468 (QKRIGSTMKV…EYDLWGSLVR (67 aa)).

It belongs to the methylthiotransferase family. RimO subfamily. [4Fe-4S] cluster is required as a cofactor.

Its subcellular location is the cytoplasm. It catalyses the reaction L-aspartate(89)-[ribosomal protein uS12]-hydrogen + (sulfur carrier)-SH + AH2 + 2 S-adenosyl-L-methionine = 3-methylsulfanyl-L-aspartate(89)-[ribosomal protein uS12]-hydrogen + (sulfur carrier)-H + 5'-deoxyadenosine + L-methionine + A + S-adenosyl-L-homocysteine + 2 H(+). Functionally, catalyzes the methylthiolation of an aspartic acid residue of ribosomal protein uS12. The protein is Ribosomal protein uS12 methylthiotransferase RimO of Vibrio vulnificus (strain CMCP6).